The chain runs to 97 residues: Large ribosomal subunit protein eL21 (97 aa).

The segment covering 1–12 (MPSSNGPRQATR) has biased composition (polar residues). Residues 1-35 (MPSSNGPRQATRNKLKNDARERGTSPPQRSIEEYD) form a disordered region.

It belongs to the eukaryotic ribosomal protein eL21 family.

This Natronomonas pharaonis (strain ATCC 35678 / DSM 2160 / CIP 103997 / JCM 8858 / NBRC 14720 / NCIMB 2260 / Gabara) (Halobacterium pharaonis) protein is Large ribosomal subunit protein eL21.